The chain runs to 339 residues: UDP-N-acetylenolpyruvoylglucosamine reductase (339 aa).

The FAD-binding PCMH-type domain maps to 18-189; it reads GVEVKAKWFA…LRVRFALNRV (172 aa). Residue Arg-166 is part of the active site. Residue Ser-239 is the Proton donor of the active site. The active site involves Glu-335.

It belongs to the MurB family. It depends on FAD as a cofactor.

The protein localises to the cytoplasm. The catalysed reaction is UDP-N-acetyl-alpha-D-muramate + NADP(+) = UDP-N-acetyl-3-O-(1-carboxyvinyl)-alpha-D-glucosamine + NADPH + H(+). It functions in the pathway cell wall biogenesis; peptidoglycan biosynthesis. Functionally, cell wall formation. The chain is UDP-N-acetylenolpyruvoylglucosamine reductase from Pseudomonas fluorescens (strain ATCC BAA-477 / NRRL B-23932 / Pf-5).